The sequence spans 578 residues: Probable arginine--tRNA ligase, mitochondrial (578 aa).

The transit peptide at 1 to 16 (MACGFRRSIASQLSRV) directs the protein to the mitochondrion. Residues 133–135 (SPN), histidine 144, tyrosine 322, aspartate 326, and glutamine 350 each bind L-arginine. The short motif at 133 to 144 (SPNVAKKFHVGH) is the 'HIGH' region element. An N6-acetyllysine modification is found at lysine 568.

Belongs to the class-I aminoacyl-tRNA synthetase family.

The protein resides in the mitochondrion membrane. The catalysed reaction is tRNA(Arg) + L-arginine + ATP = L-arginyl-tRNA(Arg) + AMP + diphosphate. Its function is as follows. Catalyzes the attachment of arginine to tRNA(Arg) in a two-step reaction: arginine is first activated by ATP to form Arg-AMP and then transferred to the acceptor end of tRNA(Arg). This Bos taurus (Bovine) protein is Probable arginine--tRNA ligase, mitochondrial (RARS2).